Reading from the N-terminus, the 369-residue chain is MKSRAAVAFAPGKPLEIVEIDVAPPKKGEVLIKVTHTGVCHTDAFTLSGDDPEGVFPVVLGHEGAGVVVEVGEGVTSVKPGDHVIPLYTEXCGECEFCRSGKTNLCVAVRETQGKGLMPDGTTRFSYNGQPLYHYMGCSTFSEYTVVAEVSLAKINPEANHEHVCLLGCGVTTGIGAVHNTAKVQPGDSVAVFGLGAIGLAVVQGARQAKAGRIIAIDTNPKKFELARRFGATDCINPNDYDKPIKDVLLDINKWGIDHTFECIGNVNVMRAALESAHRGWGQSVIIGVAGSGQEISTRPFQLVTGRVWKGSAFGGVKGRSQLPGMVEDAMKGDIDLEPFVTHTMSLDEINDAFDLMHEGKSIRTVIRY.

Cysteine 40, histidine 62, cysteine 92, cysteine 95, cysteine 98, cysteine 106, and cysteine 169 together coordinate Zn(2+).

This sequence belongs to the zinc-containing alcohol dehydrogenase family. Class-III subfamily. Homodimer. Zn(2+) serves as cofactor.

It localises to the cytoplasm. The enzyme catalyses S-(hydroxymethyl)glutathione + NADP(+) = S-formylglutathione + NADPH + H(+). The catalysed reaction is S-(hydroxymethyl)glutathione + NAD(+) = S-formylglutathione + NADH + H(+). It catalyses the reaction a primary alcohol + NAD(+) = an aldehyde + NADH + H(+). It carries out the reaction a secondary alcohol + NAD(+) = a ketone + NADH + H(+). The enzyme catalyses S-nitrosoglutathione + NADH + H(+) = S-(hydroxysulfenamide)glutathione + NAD(+). Has high formaldehyde dehydrogenase activity in the presence of glutathione and catalyzes the oxidation of normal alcohols in a reaction that is not GSH-dependent. In addition, hemithiolacetals other than those formed from GSH, including omega-thiol fatty acids, also are substrates. Also acts as a S-nitroso-glutathione reductase by catalyzing the NADH-dependent reduction of S-nitrosoglutathione. The sequence is that of S-(hydroxymethyl)glutathione dehydrogenase (frmA) from Escherichia coli O6:H1 (strain CFT073 / ATCC 700928 / UPEC).